Here is a 262-residue protein sequence, read N- to C-terminus: MMIQLECLSVTYPGGVQALQAVSLNFNPGEFTVILGASGSGKSTLLRCLNGLIQPTAGTITIEGYRQINDPKVLHQHRQRTGMIFQQHQLIARQTALQNVLTGRLAYHSTVRSFFPLPKADKYIALECLDRVGLLSKALARVDNLSGGQQQRVGIARALAQQPRLMLADEPVASLDPASSHKVISFLRQICQEDGIAAIMSLHQVDLAKAYADRIVGISQGRIVFDGSAADIEECELNRIYGNAENIHFDDIPSNQYPIASN.

An ABC transporter domain is found at 3–245 (IQLECLSVTY…ELNRIYGNAE (243 aa)). 36 to 43 (GASGSGKS) is an ATP binding site.

The protein belongs to the ABC transporter superfamily. Phosphonates importer (TC 3.A.1.9.1) family. In terms of assembly, the complex is composed of two ATP-binding proteins (PhnC), two transmembrane proteins (PhnE) and a solute-binding protein (PhnD).

It is found in the cell inner membrane. The catalysed reaction is phosphonate(out) + ATP + H2O = phosphonate(in) + ADP + phosphate + H(+). Part of the ABC transporter complex PhnCDE involved in phosphonates import. Responsible for energy coupling to the transport system. The chain is Phosphonates import ATP-binding protein PhnC 3 from Nostoc sp. (strain PCC 7120 / SAG 25.82 / UTEX 2576).